A 146-amino-acid chain; its full sequence is Leghemoglobin Lb120-29 (146 aa).

The Globin domain occupies glycine 2–serine 146. Nitrated tyrosine occurs at positions 24 and 29. Serine 44 contacts heme b. Serine 44 is subject to Phosphoserine. Histidine 61 contributes to the O2 binding site. Lysine 64, histidine 93, and lysine 96 together coordinate heme b. Tyrosine 134 is subject to Nitrated tyrosine.

This sequence belongs to the plant globin family. Monomer. In terms of processing, nitrated in effective nodules and particularly in hypoxic conditions; this mechanism may play a protective role in the symbiosis by buffering toxic peroxynitrite NO(2)(-). Nitration level decrease during nodule senescence. Phosphorylation at Ser-44 disrupts the molecular environment of its porphyrin ring oxygen binding pocket, thus leading to a reduced oxygen consumption and to the delivery of oxygen O(2) to symbiosomes. As to expression, root nodules.

The protein localises to the cytoplasm. Its subcellular location is the cytosol. It is found in the nucleus. In terms of biological role, leghemoglobin that reversibly binds oxygen O(2) through a pentacoordinated heme iron. In root nodules, facilitates the diffusion of oxygen to the bacteroids while preventing the bacterial nitrogenase from being inactivated by buffering dioxygen, nitric oxide and carbon monoxide, and promoting the formation of reactive oxygen species (ROS, e.g. H(2)O(2)). This role is essential for symbiotic nitrogen fixation (SNF). The chain is Leghemoglobin Lb120-29 from Pisum sativum (Garden pea).